The sequence spans 525 residues: GMP synthase [glutamine-hydrolyzing] (525 aa).

The 200-residue stretch at 8 to 207 (KILILDFGSQ…ALDICGCDAN (200 aa)) folds into the Glutamine amidotransferase type-1 domain. The active-site Nucleophile is Cys85. Catalysis depends on residues His181 and Glu183. The 193-residue stretch at 208 to 400 (WKPSSIIEDA…LGLPYDMLYR (193 aa)) folds into the GMPS ATP-PPase domain. 235-241 (SGGVDSS) provides a ligand contact to ATP.

Homodimer.

The catalysed reaction is XMP + L-glutamine + ATP + H2O = GMP + L-glutamate + AMP + diphosphate + 2 H(+). Its pathway is purine metabolism; GMP biosynthesis; GMP from XMP (L-Gln route): step 1/1. Catalyzes the synthesis of GMP from XMP. The protein is GMP synthase [glutamine-hydrolyzing] of Shewanella piezotolerans (strain WP3 / JCM 13877).